A 617-amino-acid chain; its full sequence is Glutamyl-tRNA(Gln) amidotransferase subunit E (617 aa).

This sequence belongs to the GatB/GatE family. GatE subfamily. In terms of assembly, heterodimer of GatD and GatE.

The catalysed reaction is L-glutamyl-tRNA(Gln) + L-glutamine + ATP + H2O = L-glutaminyl-tRNA(Gln) + L-glutamate + ADP + phosphate + H(+). Allows the formation of correctly charged Gln-tRNA(Gln) through the transamidation of misacylated Glu-tRNA(Gln) in organisms which lack glutaminyl-tRNA synthetase. The reaction takes place in the presence of glutamine and ATP through an activated gamma-phospho-Glu-tRNA(Gln). The GatDE system is specific for glutamate and does not act on aspartate. This is Glutamyl-tRNA(Gln) amidotransferase subunit E from Natronomonas pharaonis (strain ATCC 35678 / DSM 2160 / CIP 103997 / JCM 8858 / NBRC 14720 / NCIMB 2260 / Gabara) (Halobacterium pharaonis).